We begin with the raw amino-acid sequence, 47 residues long: FLSVTEPSLLGDGGDLEIRVFISDDFDGELFPRGVVDSDDLPLNVSR.

Residue Arg-47 coordinates ATP.

It belongs to the heat shock protein 90 family. As to quaternary structure, homodimer.

The protein resides in the cytoplasm. Putative molecular chaperone that may promote the maturation, structural maintenance and proper regulation of specific target proteins. The protein is Putative heat shock protein HSP90 of Populus euphratica (Euphrates poplar).